We begin with the raw amino-acid sequence, 464 residues long: 3-isopropylmalate dehydratase large subunit (464 aa).

Positions 345, 405, and 408 each coordinate [4Fe-4S] cluster.

The protein belongs to the aconitase/IPM isomerase family. LeuC type 1 subfamily. As to quaternary structure, heterodimer of LeuC and LeuD. It depends on [4Fe-4S] cluster as a cofactor.

The catalysed reaction is (2R,3S)-3-isopropylmalate = (2S)-2-isopropylmalate. Its pathway is amino-acid biosynthesis; L-leucine biosynthesis; L-leucine from 3-methyl-2-oxobutanoate: step 2/4. Functionally, catalyzes the isomerization between 2-isopropylmalate and 3-isopropylmalate, via the formation of 2-isopropylmaleate. The sequence is that of 3-isopropylmalate dehydratase large subunit from Bacteroides fragilis (strain ATCC 25285 / DSM 2151 / CCUG 4856 / JCM 11019 / LMG 10263 / NCTC 9343 / Onslow / VPI 2553 / EN-2).